The primary structure comprises 362 residues: 45 kDa calcium-binding protein (362 aa).

The N-terminal stretch at 1–36 is a signal peptide; it reads MVWPWVAMASRWGPLIGLAPCCLWLLGAVLLMDASA. N-linked (GlcNAc...) asparagine glycosylation is present at asparagine 40. EF-hand domains lie at 98–133 and 137–172; these read RSRR…KTAE and EAME…SKGH. At serine 99 the chain carries Phosphoserine. Residues aspartate 111, asparagine 113, aspartate 115, lysine 117, glutamate 122, aspartate 150, aspartate 152, aspartate 154, histidine 156, and glutamate 161 each contribute to the Ca(2+) site. The residue at position 193 (threonine 193) is a Phosphothreonine. EF-hand domains lie at 197-232, 233-268, 278-313, and 314-349; these read LENL…HSRG, MLRF…TVEN, WVKD…MNEY, and NALN…FTGS. Aspartate 213 is a binding site for Ca(2+). Threonine 217 is modified (phosphothreonine). Positions 220, 246, 248, 250, 252, and 257 each coordinate Ca(2+). A Phosphothreonine modification is found at threonine 265. Ca(2+) is bound by residues aspartate 291, asparagine 293, and aspartate 295. Threonine 299 bears the Phosphothreonine mark. Ca(2+) is bound by residues glutamate 302, aspartate 327, asparagine 329, asparagine 331, histidine 333, and glutamate 338. The tract at residues 309-362 is necessary for intracellular retention in Golgi apparatus lumen; the sequence is PMNEYNALNEAKQMIAVADENQNHHLEPEEVLKYSEFFTGSKLVDYARSVHEEF.

Belongs to the CREC family. In terms of assembly, isoform 5 interacts with STXBP1; the interaction is enhanced in presence of calcium. Isoform 5 interacts with STX3. Ubiquitous. Isoform 5 is expressed in pancreas.

The protein localises to the golgi apparatus lumen. Its subcellular location is the cytoplasm. It localises to the cell membrane. It is found in the cell projection. The protein resides in the bleb. May regulate calcium-dependent activities in the endoplasmic reticulum lumen or post-ER compartment. Its function is as follows. Isoform 5 may be involved in the exocytosis of zymogens by pancreatic acini. The protein is 45 kDa calcium-binding protein (SDF4) of Homo sapiens (Human).